The following is a 234-amino-acid chain: Leucyl/phenylalanyl-tRNA--protein transferase (234 aa).

This sequence belongs to the L/F-transferase family.

The protein localises to the cytoplasm. The enzyme catalyses N-terminal L-lysyl-[protein] + L-leucyl-tRNA(Leu) = N-terminal L-leucyl-L-lysyl-[protein] + tRNA(Leu) + H(+). It catalyses the reaction N-terminal L-arginyl-[protein] + L-leucyl-tRNA(Leu) = N-terminal L-leucyl-L-arginyl-[protein] + tRNA(Leu) + H(+). It carries out the reaction L-phenylalanyl-tRNA(Phe) + an N-terminal L-alpha-aminoacyl-[protein] = an N-terminal L-phenylalanyl-L-alpha-aminoacyl-[protein] + tRNA(Phe). Functions in the N-end rule pathway of protein degradation where it conjugates Leu, Phe and, less efficiently, Met from aminoacyl-tRNAs to the N-termini of proteins containing an N-terminal arginine or lysine. The protein is Leucyl/phenylalanyl-tRNA--protein transferase of Enterobacter sp. (strain 638).